The chain runs to 307 residues: 4-hydroxy-tetrahydrodipicolinate synthase (307 aa).

Residue S57 participates in pyruvate binding. The active-site Proton donor/acceptor is the Y145. K173 serves as the catalytic Schiff-base intermediate with substrate. I219 provides a ligand contact to pyruvate.

Belongs to the DapA family. As to quaternary structure, homotetramer; dimer of dimers.

The protein resides in the cytoplasm. It catalyses the reaction L-aspartate 4-semialdehyde + pyruvate = (2S,4S)-4-hydroxy-2,3,4,5-tetrahydrodipicolinate + H2O + H(+). The protein operates within amino-acid biosynthesis; L-lysine biosynthesis via DAP pathway; (S)-tetrahydrodipicolinate from L-aspartate: step 3/4. In terms of biological role, catalyzes the condensation of (S)-aspartate-beta-semialdehyde [(S)-ASA] and pyruvate to 4-hydroxy-tetrahydrodipicolinate (HTPA). The protein is 4-hydroxy-tetrahydrodipicolinate synthase of Polynucleobacter asymbioticus (strain DSM 18221 / CIP 109841 / QLW-P1DMWA-1) (Polynucleobacter necessarius subsp. asymbioticus).